The chain runs to 384 residues: Dual-specificity RNA methyltransferase RlmN (384 aa).

E93 acts as the Proton acceptor in catalysis. In terms of domain architecture, Radical SAM core spans 99-339; the sequence is EETRGTLCVS…TTIRKTRGDD (241 aa). A disulfide bond links C106 and C344. Residues C113, C117, and C120 each contribute to the [4Fe-4S] cluster site. Residues 170–171, S202, 224–226, and N301 each bind S-adenosyl-L-methionine; these read GE and SLH. C344 (S-methylcysteine intermediate) is an active-site residue.

It belongs to the radical SAM superfamily. RlmN family. The cofactor is [4Fe-4S] cluster.

The protein resides in the cytoplasm. It carries out the reaction adenosine(2503) in 23S rRNA + 2 reduced [2Fe-2S]-[ferredoxin] + 2 S-adenosyl-L-methionine = 2-methyladenosine(2503) in 23S rRNA + 5'-deoxyadenosine + L-methionine + 2 oxidized [2Fe-2S]-[ferredoxin] + S-adenosyl-L-homocysteine. The catalysed reaction is adenosine(37) in tRNA + 2 reduced [2Fe-2S]-[ferredoxin] + 2 S-adenosyl-L-methionine = 2-methyladenosine(37) in tRNA + 5'-deoxyadenosine + L-methionine + 2 oxidized [2Fe-2S]-[ferredoxin] + S-adenosyl-L-homocysteine. Its function is as follows. Specifically methylates position 2 of adenine 2503 in 23S rRNA and position 2 of adenine 37 in tRNAs. m2A2503 modification seems to play a crucial role in the proofreading step occurring at the peptidyl transferase center and thus would serve to optimize ribosomal fidelity. In Cupriavidus necator (strain ATCC 17699 / DSM 428 / KCTC 22496 / NCIMB 10442 / H16 / Stanier 337) (Ralstonia eutropha), this protein is Dual-specificity RNA methyltransferase RlmN.